Here is a 462-residue protein sequence, read N- to C-terminus: Elongation factor 1-alpha, somatic form (462 aa).

Residue G2 is modified to N,N,N-trimethylglycine. One can recognise a tr-type G domain in the interval 5–242 (KTHINIVVIG…DCILPPSRPT (238 aa)). The interval 14–21 (GHVDSGKS) is G1. A GTP-binding site is contributed by 14–21 (GHVDSGKS). Positions 70 to 74 (GITID) are G2. The G3 stretch occupies residues 91-94 (DAPG). GTP-binding positions include 91–95 (DAPGH) and 153–156 (NKMD). The interval 153–156 (NKMD) is G4. A G5 region spans residues 194–196 (SGW). A 5-glutamyl glycerylphosphorylethanolamine mark is found at E301 and E374.

The protein belongs to the TRAFAC class translation factor GTPase superfamily. Classic translation factor GTPase family. EF-Tu/EF-1A subfamily.

It localises to the cytoplasm. Functionally, this protein promotes the GTP-dependent binding of aminoacyl-tRNA to the A-site of ribosomes during protein biosynthesis. The protein is Elongation factor 1-alpha, somatic form (eef1as) of Xenopus laevis (African clawed frog).